The sequence spans 297 residues: UBX domain-containing protein 1 (297 aa).

A2 bears the N-acetylalanine mark. One can recognise a UBA domain in the interval 2-42 (AELTALESLIEMGFPKGRAEKALALTGNQGIEAAMDWLMEH). Residues 40-210 (MEHEDDPDVD…PSREPPTKRE (171 aa)) are disordered. The segment at 43–297 (EDDPDVDEPL…VLIVAKKCPG (255 aa)) is interaction with BRCA1. Composition is skewed to basic and acidic residues over residues 86–122 (LTEE…ERER) and 137–177 (RLQE…ERAK). A coiled-coil region spans residues 86-176 (LTEEERQEQT…KIERDKAERA (91 aa)). Over residues 187–199 (PSPPATEPGPVPS) the composition is skewed to pro residues. S199 is subject to Phosphoserine. S200 carries the phosphoserine; by MAPK12 modification. A phosphothreonine mark is found at T207 and T229. One can recognise a UBX domain in the interval 209–291 (REYDQCRIQV…GLVPSAVLIV (83 aa)). A Phosphoserine modification is found at S270.

In terms of assembly, component of a complex required to couple retrotranslocation, ubiquitination and deglycosylation composed of NGLY1, SAKS1, AMFR, VCP and RAD23B. Interacts with HOMER2. Interacts directly with VCP. Interacts with BRCA1 and BARD1; interaction takes place when BRCA1 is not autoubiquitinated bur is strongly enhanced in the presence of autoubiquitinated BRCA1.

It is found in the cytoplasm. Functionally, ubiquitin-binding protein that interacts with the BRCA1-BARD1 heterodimer, and regulates its activity. Specifically binds 'Lys-6'-linked polyubiquitin chains. Interaction with autoubiquitinated BRCA1, leads to inhibit the E3 ubiquitin-protein ligase activity of the BRCA1-BARD1 heterodimer. Component of a complex required to couple deglycosylation and proteasome-mediated degradation of misfolded proteins in the endoplasmic reticulum that are retrotranslocated in the cytosol. This chain is UBX domain-containing protein 1 (UBXN1), found in Bos taurus (Bovine).